The primary structure comprises 877 residues: Dynamin (877 aa).

Residues 23–289 (QLDLPQIAVV…LTNHIRDTLP (267 aa)) form the Dynamin-type G domain. The interval 33 to 40 (GGQSAGKS) is G1 motif. 33-41 (GGQSAGKSS) is a binding site for GTP. The segment at 59–61 (VTR) is G2 motif. Residues 131–134 (DLPG) form a G3 motif region. The segment at 200-203 (TKLD) is G4 motif. GTP contacts are provided by residues 200–206 (TKLDLMD) and 231–234 (NRSQ). The G5 motif stretch occupies residues 230 to 233 (VNRS). In terms of domain architecture, PH spans 513 to 621 (QVIRKGHMVI…WKASFLRAGV (109 aa)). Disordered stretches follow at residues 623–648 (PEKQ…QLER) and 740–834 (TVSS…SGAV). The segment covering 630–641 (ENGDESASEESS) has biased composition (acidic residues). The GED domain occupies 650-741 (VETIRNLVDS…IIGDVSMATV (92 aa)). 3 positions are modified to phosphoserine: Ser756, Ser764, and Ser767. The segment covering 788–826 (PPLPPSTGRPAPAIPNRPGGGAPPLPGGRPGGSLPPPML) has biased composition (pro residues).

The protein belongs to the TRAFAC class dynamin-like GTPase superfamily. Dynamin/Fzo/YdjA family.

It is found in the cytoplasm. The protein localises to the cytoskeleton. The enzyme catalyses GTP + H2O = GDP + phosphate + H(+). Microtubule-associated force-producing protein which is involved in the production of microtubule bundles and which is able to bind and hydrolyze GTP. Implicated in endocytic protein sorting. The protein is Dynamin (shi) of Drosophila melanogaster (Fruit fly).